Reading from the N-terminus, the 390-residue chain is Chorismate synthase (390 aa).

NADP(+) is bound by residues Arg39 and Arg45. FMN is bound by residues 132 to 134 (RSS), 253 to 254 (NA), Gly298, 313 to 317 (KPIPT), and Arg339.

The protein belongs to the chorismate synthase family. As to quaternary structure, homotetramer. It depends on FMNH2 as a cofactor.

The enzyme catalyses 5-O-(1-carboxyvinyl)-3-phosphoshikimate = chorismate + phosphate. The protein operates within metabolic intermediate biosynthesis; chorismate biosynthesis; chorismate from D-erythrose 4-phosphate and phosphoenolpyruvate: step 7/7. Catalyzes the anti-1,4-elimination of the C-3 phosphate and the C-6 proR hydrogen from 5-enolpyruvylshikimate-3-phosphate (EPSP) to yield chorismate, which is the branch point compound that serves as the starting substrate for the three terminal pathways of aromatic amino acid biosynthesis. This reaction introduces a second double bond into the aromatic ring system. This chain is Chorismate synthase, found in Bacillus pumilus (strain SAFR-032).